An 88-amino-acid polypeptide reads, in one-letter code: Small ribosomal subunit protein uS19 (88 aa).

This sequence belongs to the universal ribosomal protein uS19 family.

Functionally, protein S19 forms a complex with S13 that binds strongly to the 16S ribosomal RNA. The sequence is that of Small ribosomal subunit protein uS19 (rpsS) from Chlamydia muridarum (strain MoPn / Nigg).